A 192-amino-acid polypeptide reads, in one-letter code: Capsid protein (192 aa).

Residues 1 to 30 (MEDSQPIKVRQPSISAPGTHLSPNPGQQSP) are disordered. Residues 12–30 (PSISAPGTHLSPNPGQQSP) are compositionally biased toward polar residues.

The protein belongs to the tymoviruses capsid protein family.

The protein resides in the virion. Functionally, self-assembles to form a T=3 icosahedral capsid composed of 180 copies of the capsid protein. The capsid encapsulates the single-stranded RNA genome. This chain is Capsid protein, found in Ononis.